The sequence spans 470 residues: Solvent efflux pump outer membrane protein SrpC (470 aa).

An N-terminal signal peptide occupies residues 1–16; that stretch reads MKFKSLPMFALLMLGG. Cys17 is lipidated: N-palmitoyl cysteine. The S-diacylglycerol cysteine moiety is linked to residue Cys17. Residues 104 to 123 form a disordered region; it reads LDGQASGNRTRLPDDLSPTG.

The protein belongs to the outer membrane factor (OMF) (TC 1.B.17) family.

It is found in the cell outer membrane. The outer membrane component of an organic solvent efflux pump. Involved in export of a number of low log POW compounds including hexane (log POW 3.5), toluene (log POW 2.5) and dimethylphthalate (log POW 2.3). The solvent resistance phenotype has been postulated to depend on the operon expression level. In Pseudomonas putida (Arthrobacter siderocapsulatus), this protein is Solvent efflux pump outer membrane protein SrpC (srpC).